The sequence spans 546 residues: Beta-amylase (546 aa).

The signal sequence occupies residues 1 to 30 (MKNQFQYCCIVILSVVMLFVSLLIPQASSA). Residue Asp-79 participates in substrate binding. Residues Glu-86, Asp-90, and Gln-91 each contribute to the Ca(2+) site. Substrate-binding residues include His-119 and Asp-127. A disulfide bridge connects residues Cys-121 and Cys-129. 2 residues coordinate Ca(2+): Glu-171 and Glu-174. Glu-202 acts as the Proton donor in catalysis. Substrate is bound by residues Lys-317, His-322, and Thr-360. Residue Glu-397 is the Proton acceptor of the active site. Substrate is bound by residues 398 to 399 (NA) and Arg-427. The CBM20 domain maps to 444-546 (LLGVTPVMQT…LKTTSHTSSW (103 aa)).

This sequence belongs to the glycosyl hydrolase 14 family. Monomer. Ca(2+) is required as a cofactor.

The catalysed reaction is Hydrolysis of (1-&gt;4)-alpha-D-glucosidic linkages in polysaccharides so as to remove successive maltose units from the non-reducing ends of the chains.. The sequence is that of Beta-amylase (spoII) from Bacillus cereus.